The sequence spans 270 residues: Gap junction beta-3 protein (270 aa).

The Cytoplasmic portion of the chain corresponds to 1 to 20 (MDWKKLQDLLSGVNQYSTAF). A helical transmembrane segment spans residues 21–40 (GRIWLSVVFVFRVLVYVVAA). At 41–75 (ERVWGDEQKDFDCNTRQPGCTNVCYDNFFPISNIR) the chain is on the extracellular side. Residues 76–98 (LWALQLIFVTCPSMLVILHVAYR) traverse the membrane as a helical segment. At 99–126 (EERERKHRQKHGEQCAKLYSHPGKKHGG) the chain is on the cytoplasmic side. A helical membrane pass occupies residues 127 to 149 (LWWTYLFSLIFKLIIELVFLYVL). Residues 150–188 (HTLWHGFTMPRLVQCASIVPCPNTVDCYIARPTEKKVFT) are Extracellular-facing. The helical transmembrane segment at 189-211 (YFMVGASAVCIILTICEICYLIF) threads the bilayer. At 212 to 270 (HRIMRGISKGKSTKSISSPKSSSRASTCRCHHKLLESGDPEADPASEKLQASAPSLTPI) the chain is on the cytoplasmic side. Residues 246 to 270 (LESGDPEADPASEKLQASAPSLTPI) are disordered.

The protein belongs to the connexin family. Beta-type (group I) subfamily. As to quaternary structure, a connexon is composed of a hexamer of connexins. Interacts with CNST.

It localises to the cell membrane. It is found in the cell junction. The protein localises to the gap junction. One gap junction consists of a cluster of closely packed pairs of transmembrane channels, the connexons, through which materials of low MW diffuse from one cell to a neighboring cell. The chain is Gap junction beta-3 protein (Gjb3) from Mus musculus (Mouse).